A 273-amino-acid polypeptide reads, in one-letter code: Probable branched-chain-amino-acid aminotransferase (273 aa).

At lysine 133 the chain carries N6-(pyridoxal phosphate)lysine.

It belongs to the class-IV pyridoxal-phosphate-dependent aminotransferase family. The cofactor is pyridoxal 5'-phosphate.

The catalysed reaction is L-leucine + 2-oxoglutarate = 4-methyl-2-oxopentanoate + L-glutamate. It carries out the reaction L-isoleucine + 2-oxoglutarate = (S)-3-methyl-2-oxopentanoate + L-glutamate. It catalyses the reaction L-valine + 2-oxoglutarate = 3-methyl-2-oxobutanoate + L-glutamate. It functions in the pathway amino-acid biosynthesis; L-isoleucine biosynthesis; L-isoleucine from 2-oxobutanoate: step 4/4. Its pathway is amino-acid biosynthesis; L-leucine biosynthesis; L-leucine from 3-methyl-2-oxobutanoate: step 4/4. It participates in amino-acid biosynthesis; L-valine biosynthesis; L-valine from pyruvate: step 4/4. In terms of biological role, acts on leucine, isoleucine and valine. This chain is Probable branched-chain-amino-acid aminotransferase (ilvE), found in Thermotoga maritima (strain ATCC 43589 / DSM 3109 / JCM 10099 / NBRC 100826 / MSB8).